Consider the following 407-residue polypeptide: Putative polysaccharide ligase RF_0568 (407 aa).

Transmembrane regions (helical) follow at residues 15–35, 71–91, 100–120, 129–149, 166–186, 203–223, 229–249, 272–292, 324–344, and 379–399; these read LGMV…LMLF, MTIK…LFAI, FIQV…VPFG, LILG…SHGF, GCAL…SSGK, ISDS…FILA, IFFK…PVIA, LFIW…GYGF, ILQI…CLVY, and IWQI…KLLV.

Belongs to the O-antigen ligase family.

The protein resides in the membrane. This Rickettsia felis (strain ATCC VR-1525 / URRWXCal2) (Rickettsia azadi) protein is Putative polysaccharide ligase RF_0568.